Reading from the N-terminus, the 343-residue chain is Twinfilin (343 aa).

2 ADF-H domains span residues 11–135 (EQLA…EGYR) and 184–312 (EATV…DELH). The segment at 319-343 (RPAFAKPKGPPNRGAKRLTRPTAED) is disordered.

It belongs to the actin-binding proteins ADF family. Twinfilin subfamily. As to quaternary structure, interacts with G-actin; ADP-actin form.

The protein resides in the cytoplasm. The protein localises to the cytoskeleton. It localises to the cell cortex. Actin-binding protein involved in motile and morphological processes. Inhibits actin polymerization, likely by sequestering G-actin. The polypeptide is Twinfilin (twf) (Drosophila melanogaster (Fruit fly)).